Consider the following 183-residue polypeptide: NAD(P)H-quinone oxidoreductase subunit J (183 aa).

The interval 1–21 (MAEENAQEKQAPPSAGEQSEP) is disordered.

The protein belongs to the complex I 30 kDa subunit family. In terms of assembly, NDH-1 can be composed of about 15 different subunits; different subcomplexes with different compositions have been identified which probably have different functions.

The protein resides in the cellular thylakoid membrane. It carries out the reaction a plastoquinone + NADH + (n+1) H(+)(in) = a plastoquinol + NAD(+) + n H(+)(out). It catalyses the reaction a plastoquinone + NADPH + (n+1) H(+)(in) = a plastoquinol + NADP(+) + n H(+)(out). Functionally, NDH-1 shuttles electrons from an unknown electron donor, via FMN and iron-sulfur (Fe-S) centers, to quinones in the respiratory and/or the photosynthetic chain. The immediate electron acceptor for the enzyme in this species is believed to be plastoquinone. Couples the redox reaction to proton translocation, and thus conserves the redox energy in a proton gradient. Cyanobacterial NDH-1 also plays a role in inorganic carbon-concentration. This is NAD(P)H-quinone oxidoreductase subunit J from Synechococcus sp. (strain JA-2-3B'a(2-13)) (Cyanobacteria bacterium Yellowstone B-Prime).